The sequence spans 403 residues: Soluble calcium-activated nucleotidase 1 (403 aa).

The Cytoplasmic segment spans residues Met-1–Arg-44. The helical; Signal-anchor for type II membrane protein transmembrane segment at Val-45–Ser-61 threads the bilayer. The Lumenal portion of the chain corresponds to His-62–Ile-403. N-linked (GlcNAc...) asparagine glycosylation occurs at Asn-90. Residues Ser-170, Asp-171, Glu-217, Glu-286, Ser-347, and Glu-398 each coordinate Ca(2+).

It belongs to the apyrase family. Monomer. Homodimer; dimerization is Ca(2+)-dependent. Requires Ca(2+) as cofactor. Detected in intestine, thymus, heart, lung, spleen, kidney, liver, testis, skeletal muscle and brain.

It localises to the endoplasmic reticulum membrane. It is found in the golgi apparatus. The protein localises to the golgi stack membrane. The enzyme catalyses a ribonucleoside 5'-diphosphate + H2O = a ribonucleoside 5'-phosphate + phosphate + H(+). In terms of biological role, calcium-dependent nucleotidase with a preference for UDP. The order of activity with different substrates is UDP &gt; GDP &gt; IDP &gt;&gt; UTP &gt; CDP = GTP = ITP. Has very low activity towards ADP and even lower activity towards ATP. Does not hydrolyze AMP and GMP. Involved in proteoglycan synthesis. The polypeptide is Soluble calcium-activated nucleotidase 1 (Cant1) (Rattus norvegicus (Rat)).